Here is a 211-residue protein sequence, read N- to C-terminus: Ferric nitrobindin-like protein (211 aa).

The GXWXGXG signature appears at 21–27 (GRWRGPG). Positions 104–130 (GVVQEGSDTRTEPGGAEPDPAGRRAPS) are disordered.

Belongs to the nitrobindin family.

The polypeptide is Ferric nitrobindin-like protein (Beutenbergia cavernae (strain ATCC BAA-8 / DSM 12333 / CCUG 43141 / JCM 11478 / NBRC 16432 / NCIMB 13614 / HKI 0122)).